Consider the following 448-residue polypeptide: MPLDLYNTLTRRKERFEPMTPDRVGMYVCGPTVYDTAHIGNARPVVFDLLFRLLRRLYPAVTYVRNITASDDKIIDRRATTGADRGADQAHRGPLPRRHGPLNAAPTIEPRATHHISHMVALIGLLIEPATPTPRKGTCCSPCRRWRSTGQLSRRSLDEMIAGARVEVAPYKRDSSDFVLWKPSTDGQPGWDSPWGRGRPGWHIECSAMAKEHLGVTFDIHGGGLDLILPDHENEIAQSRCAHAGEPLARYWVHQRLRDRRGARRMSKSLGNLLHRGTSCWTEFPGGGHPLGVRPYRSRGLPEAEESKATLDRWYQALRGDPAPAQAELPFDVLAALEDDLNSPLAISHLHELASAVNKATGEAEKAAAKGRCRSAERWAAPETRSVVPLGAEGAAALSDADIQQRIEDRSAARKAKNYAEADRIRKELADLGIVLEDGPQGTTWKRA.

C29 serves as a coordination point for Zn(2+). The short motif at 31 to 41 is the 'HIGH' region element; the sequence is PTVYDTAHIGN. A compositionally biased stretch (basic and acidic residues) spans 79–91; that stretch reads ATTGADRGADQAH. Residues 79–106 are disordered; that stretch reads ATTGADRGADQAHRGPLPRRHGPLNAAP. The Zn(2+) site is built by C206 and E235. The 'KMSKS' region signature appears at 265 to 269; sequence RMSKS. K268 is an ATP binding site.

The protein belongs to the class-I aminoacyl-tRNA synthetase family. Monomer. Requires Zn(2+) as cofactor.

Its subcellular location is the cytoplasm. The enzyme catalyses tRNA(Cys) + L-cysteine + ATP = L-cysteinyl-tRNA(Cys) + AMP + diphosphate. The chain is Cysteine--tRNA ligase (cysS) from Azospirillum brasilense.